The following is a 185-amino-acid chain: Large ribosomal subunit protein uL5 (185 aa).

The protein belongs to the universal ribosomal protein uL5 family. As to quaternary structure, part of the 50S ribosomal subunit; part of the 5S rRNA/L5/L18/L25 subcomplex. Contacts the 5S rRNA and the P site tRNA. Forms a bridge to the 30S subunit in the 70S ribosome.

Its function is as follows. This is one of the proteins that bind and probably mediate the attachment of the 5S RNA into the large ribosomal subunit, where it forms part of the central protuberance. In the 70S ribosome it contacts protein S13 of the 30S subunit (bridge B1b), connecting the 2 subunits; this bridge is implicated in subunit movement. Contacts the P site tRNA; the 5S rRNA and some of its associated proteins might help stabilize positioning of ribosome-bound tRNAs. The sequence is that of Large ribosomal subunit protein uL5 from Caulobacter sp. (strain K31).